The chain runs to 407 residues: 1-deoxy-D-xylulose 5-phosphate reductoisomerase (407 aa).

Thr10, Gly11, Ser12, Ile13, Gly36, and Asn131 together coordinate NADPH. Residue Lys132 coordinates 1-deoxy-D-xylulose 5-phosphate. Glu133 contributes to the NADPH binding site. Asp155 is a Mn(2+) binding site. Ser156, Glu157, Ser181, and His204 together coordinate 1-deoxy-D-xylulose 5-phosphate. Residue Glu157 participates in Mn(2+) binding. Gly210 contributes to the NADPH binding site. Residues Ser217, Asn222, Lys223, and Glu226 each contribute to the 1-deoxy-D-xylulose 5-phosphate site. Glu226 lines the Mn(2+) pocket.

It belongs to the DXR family. Requires Mg(2+) as cofactor. The cofactor is Mn(2+).

It catalyses the reaction 2-C-methyl-D-erythritol 4-phosphate + NADP(+) = 1-deoxy-D-xylulose 5-phosphate + NADPH + H(+). Its pathway is isoprenoid biosynthesis; isopentenyl diphosphate biosynthesis via DXP pathway; isopentenyl diphosphate from 1-deoxy-D-xylulose 5-phosphate: step 1/6. Functionally, catalyzes the NADPH-dependent rearrangement and reduction of 1-deoxy-D-xylulose-5-phosphate (DXP) to 2-C-methyl-D-erythritol 4-phosphate (MEP). This chain is 1-deoxy-D-xylulose 5-phosphate reductoisomerase, found in Cutibacterium acnes (strain DSM 16379 / KPA171202) (Propionibacterium acnes).